Consider the following 423-residue polypeptide: Acaloleptin A (423 aa).

An N-terminal signal peptide occupies residues 1-17 (MITKISLILFAVLLVSG). The propeptide occupies 18–26 (LEEEERWKR). Disordered regions lie at residues 28–58 (LQPGAPNVNNNDQPWQVSPHISRDDSGNTKT), 108–128 (INNKDQPWQVSPHISRDDNGN), 180–203 (NVNNKDQPWQVSPHISRDDSGNTR), and 355–385 (SDDEDEEEEEDQPWQLNPNIARGDDGNTRAD). The segment covering 34–43 (NVNNNDQPWQ) has biased composition (polar residues). The span at 180 to 189 (NVNNKDQPWQ) shows a compositional bias: polar residues. Positions 357 to 366 (DEDEEEEEDQ) are enriched in acidic residues. Residues 376–385 (RGDDGNTRAD) are compositionally biased toward basic and acidic residues.

Belongs to the coleoptericin family. Hemolymph (at protein level). Larval fat body.

The protein localises to the secreted. Its function is as follows. Acaloleptins A1-A4 show antibacterial activity against Gram-negative bacteria but not against Gram-positive bacteria. Acaloleptin A5 shows antibacterial activity against Gram-positive bacteria but not against Gram-negative bacteria, and may also have antifungal activity. In Acalolepta luxuriosa (Udo longhorn beetle), this protein is Acaloleptin A.